The primary structure comprises 255 residues: Methylthioribulose-1-phosphate dehydratase (255 aa).

Cys-98 is a substrate binding site. Residues His-116 and His-118 each contribute to the Zn(2+) site. The Proton donor/acceptor role is filled by Glu-150. A Zn(2+)-binding site is contributed by His-207.

Belongs to the aldolase class II family. MtnB subfamily. Zn(2+) is required as a cofactor.

Its subcellular location is the cytoplasm. The catalysed reaction is 5-(methylsulfanyl)-D-ribulose 1-phosphate = 5-methylsulfanyl-2,3-dioxopentyl phosphate + H2O. It participates in amino-acid biosynthesis; L-methionine biosynthesis via salvage pathway; L-methionine from S-methyl-5-thio-alpha-D-ribose 1-phosphate: step 2/6. In terms of biological role, catalyzes the dehydration of methylthioribulose-1-phosphate (MTRu-1-P) into 2,3-diketo-5-methylthiopentyl-1-phosphate (DK-MTP-1-P). The protein is Methylthioribulose-1-phosphate dehydratase of Pyricularia oryzae (strain 70-15 / ATCC MYA-4617 / FGSC 8958) (Rice blast fungus).